Reading from the N-terminus, the 631-residue chain is Phosphomethylpyrimidine synthase (631 aa).

Substrate contacts are provided by residues Asn-239, Met-268, Tyr-297, His-333, 353–355 (SRG), 394–397 (DGLR), and Glu-433. His-437 contacts Zn(2+). Tyr-460 is a binding site for substrate. His-501 contributes to the Zn(2+) binding site. The [4Fe-4S] cluster site is built by Cys-581, Cys-584, and Cys-589.

The protein belongs to the ThiC family. As to quaternary structure, homodimer. Requires [4Fe-4S] cluster as cofactor.

It carries out the reaction 5-amino-1-(5-phospho-beta-D-ribosyl)imidazole + S-adenosyl-L-methionine = 4-amino-2-methyl-5-(phosphooxymethyl)pyrimidine + CO + 5'-deoxyadenosine + formate + L-methionine + 3 H(+). It functions in the pathway cofactor biosynthesis; thiamine diphosphate biosynthesis. Functionally, catalyzes the synthesis of the hydroxymethylpyrimidine phosphate (HMP-P) moiety of thiamine from aminoimidazole ribotide (AIR) in a radical S-adenosyl-L-methionine (SAM)-dependent reaction. The polypeptide is Phosphomethylpyrimidine synthase (Escherichia coli (strain 55989 / EAEC)).